The following is a 141-amino-acid chain: Nucleoside diphosphate kinase (141 aa).

ATP contacts are provided by Lys9, Phe57, Arg85, Thr91, Arg102, and Asn112. Residue His115 is the Pros-phosphohistidine intermediate of the active site.

Belongs to the NDK family. In terms of assembly, homotetramer. Mg(2+) is required as a cofactor.

Its subcellular location is the cytoplasm. It catalyses the reaction a 2'-deoxyribonucleoside 5'-diphosphate + ATP = a 2'-deoxyribonucleoside 5'-triphosphate + ADP. It carries out the reaction a ribonucleoside 5'-diphosphate + ATP = a ribonucleoside 5'-triphosphate + ADP. Major role in the synthesis of nucleoside triphosphates other than ATP. The ATP gamma phosphate is transferred to the NDP beta phosphate via a ping-pong mechanism, using a phosphorylated active-site intermediate. In Chloroherpeton thalassium (strain ATCC 35110 / GB-78), this protein is Nucleoside diphosphate kinase.